The primary structure comprises 293 residues: Ribosomal protein L11 methyltransferase (293 aa).

Residues threonine 144, glycine 165, aspartate 187, and asparagine 228 each coordinate S-adenosyl-L-methionine.

Belongs to the methyltransferase superfamily. PrmA family.

The protein resides in the cytoplasm. It carries out the reaction L-lysyl-[protein] + 3 S-adenosyl-L-methionine = N(6),N(6),N(6)-trimethyl-L-lysyl-[protein] + 3 S-adenosyl-L-homocysteine + 3 H(+). Functionally, methylates ribosomal protein L11. In Methylococcus capsulatus (strain ATCC 33009 / NCIMB 11132 / Bath), this protein is Ribosomal protein L11 methyltransferase.